Reading from the N-terminus, the 68-residue chain is Tabimmunregulin 1 (68 aa).

A signal peptide spans 1-26; the sequence is MLLKSYVFFLLSLLIVGLFTSRDADA. The propeptide occupies 27-38; sequence QYEDLVTGYLRK.

Expressed in salivary glands.

The protein resides in the secreted. Functionally, horsefly salivary gland immunosuppressant protein that likely inhibits the host inflammatory response by regulation of anti- and pro-inflammatory cytokines. When tested on mouse splenocytes in the presence of LPS, it increases the secretion of the proinflammatory cytokine interleukin-10 (IL10) and decreases the secretion of the proinflammatory cytokine interferon-gamma (IFNG) in a dose-dependent manner. The chain is Tabimmunregulin 1 from Tabanus yao (Horsefly).